The chain runs to 557 residues: Glypican-1 (557 aa).

Residues 1–23 (MELRTRGWWLLCAAAALVVCARG) form the signal peptide. Cystine bridges form between cysteine 32-cysteine 68, cysteine 62-cysteine 255, cysteine 69-cysteine 258, cysteine 190-cysteine 342, cysteine 245-cysteine 278, cysteine 267-cysteine 414, and cysteine 271-cysteine 400. N-linked (GlcNAc...) asparagine glycosylation is found at asparagine 79 and asparagine 116. The disordered stretch occupies residues 477–531 (FQDASDDGSGSGSGGGCPDDTCGRRVSKKSSSSRTPLTHALPGLSEQEGQKTSAA). Serine 485, serine 487, and serine 489 each carry an O-linked (Xyl...) (heparan sulfate) serine glycan. The GPI-anchor amidated serine moiety is linked to residue serine 529. Positions 530 to 557 (AATCPEPHSFFLLFLVTLVLAAARPRWR) are cleaved as a propeptide — removed in mature form.

It belongs to the glypican family. In terms of processing, S-nitrosylated in a Cu(2+)-dependent manner. Nitric acid (NO) is released from the nitrosylated cysteines by ascorbate or by some other reducing agent, in a Cu(2+) or Zn(2+) dependent manner. This free nitric oxide is then capable of cleaving the heparan sulfate side chains. Post-translationally, N- and O-glycosylated. N-glycosylation is mainly of the complex type containing sialic acid. O-glycosylated with heparan sulfate. The heparan sulfate chains can be cleaved either by the action of heparanase or, degraded by a deaminative process that uses nitric oxide (NO) released from the S-nitrosylated cysteines. This process is triggered by ascorbate, or by some other reducing agent, in a Cu(2+)- or Zn(2+) dependent manner. Cu(2+) ions are provided by ceruloproteins such as APP, PRNP or CP which associate with GCP1 in intracellular compartments or lipid rafts. This cell-associated glypican is further processed to give rise to a medium-released species.

It localises to the cell membrane. Its subcellular location is the endosome. The protein localises to the secreted. The protein resides in the extracellular space. Functionally, cell surface proteoglycan that bears heparan sulfate. Binds, via the heparan sulfate side chains, alpha-4 (V) collagen and participates in Schwann cell myelination. May act as a catalyst in increasing the rate of conversion of prion protein PRPN(C) to PRNP(Sc) via associating (via the heparan sulfate side chains) with both forms of PRPN, targeting them to lipid rafts and facilitating their interaction. Required for proper skeletal muscle differentiation by sequestering FGF2 in lipid rafts preventing its binding to receptors (FGFRs) and inhibiting the FGF-mediated signaling. Binds Cu(2+) or Zn(2+) ions. The chain is Glypican-1 (Gpc1) from Mus musculus (Mouse).